The chain runs to 828 residues: Periplasmic nitrate reductase (828 aa).

The tat-type signal signal peptide spans 1-31 (MKLSRRSFMKANAVAAAAAAAGLSVPGVARA). The region spanning 39–95 (IKWDKAPCRFCGTGCGVLVGTQQGRVVACQGDPDAPVNRGLNCIKGYFLPKIMYGKD) is the 4Fe-4S Mo/W bis-MGD-type domain. Residues C46, C49, C53, and C81 each contribute to the [4Fe-4S] cluster site. Mo-bis(molybdopterin guanine dinucleotide) is bound by residues K83, Q150, N175, C179, 212–219 (WGANMAEM), 243–247 (STYQH), 262–264 (QSD), M372, Q376, N482, 508–509 (SD), K531, D558, and 718–727 (TGRVLEHWHT). Residue F794 coordinates substrate. Mo-bis(molybdopterin guanine dinucleotide) is bound by residues N802 and K819.

The protein belongs to the prokaryotic molybdopterin-containing oxidoreductase family. NasA/NapA/NarB subfamily. As to quaternary structure, component of the periplasmic nitrate reductase NapAB complex composed of NapA and NapB. The cofactor is [4Fe-4S] cluster. Requires Mo-bis(molybdopterin guanine dinucleotide) as cofactor. In terms of processing, predicted to be exported by the Tat system. The position of the signal peptide cleavage has not been experimentally proven.

The protein localises to the periplasm. It carries out the reaction 2 Fe(II)-[cytochrome] + nitrate + 2 H(+) = 2 Fe(III)-[cytochrome] + nitrite + H2O. Catalytic subunit of the periplasmic nitrate reductase complex NapAB. Receives electrons from NapB and catalyzes the reduction of nitrate to nitrite. The sequence is that of Periplasmic nitrate reductase from Shigella boydii serotype 18 (strain CDC 3083-94 / BS512).